The sequence spans 206 residues: Ribosomal RNA large subunit methyltransferase E (206 aa).

Positions 63, 65, 83, 99, and 124 each coordinate S-adenosyl-L-methionine. Lysine 164 functions as the Proton acceptor in the catalytic mechanism.

Belongs to the class I-like SAM-binding methyltransferase superfamily. RNA methyltransferase RlmE family.

It localises to the cytoplasm. The enzyme catalyses uridine(2552) in 23S rRNA + S-adenosyl-L-methionine = 2'-O-methyluridine(2552) in 23S rRNA + S-adenosyl-L-homocysteine + H(+). In terms of biological role, specifically methylates the uridine in position 2552 of 23S rRNA at the 2'-O position of the ribose in the fully assembled 50S ribosomal subunit. The polypeptide is Ribosomal RNA large subunit methyltransferase E (Buchnera aphidicola subsp. Acyrthosiphon pisum (strain APS) (Acyrthosiphon pisum symbiotic bacterium)).